A 148-amino-acid chain; its full sequence is DnaJ homolog subfamily C member 24 (148 aa).

The J domain maps to 10-81 (DWYSILGADP…ETKKKYDLQR (72 aa)). Residues 92-147 (VDAQVRLEEMSWNQGDESFFLSCRCGGKYTVSKDEAQEATLISCDACSLIVELLHQ) enclose the DPH-type MB domain. Positions 114, 116, 135, and 138 each coordinate Zn(2+).

The protein belongs to the DPH4 family. In terms of assembly, monomer and homooligomer. Iron binding promotes oligomerization. As to expression, detected in heart, brain, spleen, lung, liver, kidney and testis.

The protein localises to the cytoplasm. It is found in the cytoskeleton. It participates in protein modification; peptidyl-diphthamide biosynthesis. Its function is as follows. The iron-bound form is redox-active and can function as electron carrier. Stimulates the ATPase activity of several Hsp70-type chaperones. This ability is enhanced by iron-binding. Plays a role in the diphthamide biosynthesis, a post-translational modification of histidine which occurs in translation elongation factor 2 (EEF2). In Mus musculus (Mouse), this protein is DnaJ homolog subfamily C member 24 (Dnajc24).